Consider the following 140-residue polypeptide: Nucleoside diphosphate kinase (140 aa).

Positions 11, 59, 87, 93, 104, and 114 each coordinate ATP. H117 serves as the catalytic Pros-phosphohistidine intermediate.

The protein belongs to the NDK family. As to quaternary structure, homotetramer. Mg(2+) serves as cofactor.

It is found in the cytoplasm. The enzyme catalyses a 2'-deoxyribonucleoside 5'-diphosphate + ATP = a 2'-deoxyribonucleoside 5'-triphosphate + ADP. It catalyses the reaction a ribonucleoside 5'-diphosphate + ATP = a ribonucleoside 5'-triphosphate + ADP. Major role in the synthesis of nucleoside triphosphates other than ATP. The ATP gamma phosphate is transferred to the NDP beta phosphate via a ping-pong mechanism, using a phosphorylated active-site intermediate. The chain is Nucleoside diphosphate kinase from Bartonella tribocorum (strain CIP 105476 / IBS 506).